The following is a 297-amino-acid chain: 3-methyl-2-oxobutanoate hydroxymethyltransferase (297 aa).

Positions 1 to 12 (MSEQISEQSEQN) are enriched in polar residues. The tract at residues 1-36 (MSEQISEQSEQNVYGACPPVPAGESSPSAASAPRTK) is disordered. The span at 22 to 33 (AGESSPSAASAP) shows a compositional bias: low complexity. Residues Asp-78 and Asp-117 each contribute to the Mg(2+) site. 3-methyl-2-oxobutanoate contacts are provided by residues 78–79 (DS), Asp-117, and Lys-147. Mg(2+) is bound at residue Glu-149. Residue Glu-215 is the Proton acceptor of the active site.

The protein belongs to the PanB family. Homodecamer; pentamer of dimers. Requires Mg(2+) as cofactor.

The protein localises to the cytoplasm. It catalyses the reaction 3-methyl-2-oxobutanoate + (6R)-5,10-methylene-5,6,7,8-tetrahydrofolate + H2O = 2-dehydropantoate + (6S)-5,6,7,8-tetrahydrofolate. Its pathway is cofactor biosynthesis; (R)-pantothenate biosynthesis; (R)-pantoate from 3-methyl-2-oxobutanoate: step 1/2. Its function is as follows. Catalyzes the reversible reaction in which hydroxymethyl group from 5,10-methylenetetrahydrofolate is transferred onto alpha-ketoisovalerate to form ketopantoate. This chain is 3-methyl-2-oxobutanoate hydroxymethyltransferase, found in Mycobacterium ulcerans (strain Agy99).